Consider the following 416-residue polypeptide: Cytochrome P450 monooxygenase PikC (416 aa).

Substrate contacts are provided by residues E94, A187–M191, and H238–E246. C354 lines the heme pocket.

It belongs to the cytochrome P450 family. It depends on heme as a cofactor.

The catalysed reaction is narbomycin + 2 reduced [2Fe-2S]-[ferredoxin] + O2 + 2 H(+) = pikromycin + 2 oxidized [2Fe-2S]-[ferredoxin] + H2O. It carries out the reaction narbomycin + 2 reduced [2Fe-2S]-[ferredoxin] + O2 + 2 H(+) = neopikromycin + 2 oxidized [2Fe-2S]-[ferredoxin] + H2O. It catalyses the reaction narbomycin + 4 reduced [2Fe-2S]-[ferredoxin] + 2 O2 + 4 H(+) = novapikromycin + 4 oxidized [2Fe-2S]-[ferredoxin] + 2 H2O. The enzyme catalyses 10-deoxymethymycin + 2 reduced [2Fe-2S]-[ferredoxin] + O2 + 2 H(+) = methymycin + 2 oxidized [2Fe-2S]-[ferredoxin] + H2O. The catalysed reaction is 10-deoxymethymycin + 2 reduced [2Fe-2S]-[ferredoxin] + O2 + 2 H(+) = neomethymycin + 2 oxidized [2Fe-2S]-[ferredoxin] + H2O. It carries out the reaction 10-deoxymethymycin + 4 reduced [2Fe-2S]-[ferredoxin] + 2 O2 + 4 H(+) = novamethymycin + 4 oxidized [2Fe-2S]-[ferredoxin] + 2 H2O. The protein operates within antibiotic biosynthesis. Functionally, catalyzes the hydroxylation of narbomycin to give rise to pikromycin, and of 10-deoxymethymycin (YC-17) to give rise to methymycin and neomethymycin during macrolide antibiotic biosynthesis. In addition, produces low amounts of neopicromycin, novapikromycin and novamethymycin. Requires the participation of a ferredoxin and a ferredoxin reductase for the transfer of electrons from NADPH to the monooxygenase. The protein is Cytochrome P450 monooxygenase PikC of Streptomyces venezuelae.